The chain runs to 77 residues: Acyl carrier protein (77 aa).

One can recognise a Carrier domain in the interval 2 to 77; the sequence is SAIDKRVKEI…DAIDYITEHT (76 aa). The residue at position 37 (Ser37) is an O-(pantetheine 4'-phosphoryl)serine.

It belongs to the acyl carrier protein (ACP) family. In terms of processing, 4'-phosphopantetheine is transferred from CoA to a specific serine of apo-ACP by AcpS. This modification is essential for activity because fatty acids are bound in thioester linkage to the sulfhydryl of the prosthetic group.

It is found in the cytoplasm. Its pathway is lipid metabolism; fatty acid biosynthesis. Functionally, carrier of the growing fatty acid chain in fatty acid biosynthesis. This is Acyl carrier protein from Geobacter metallireducens (strain ATCC 53774 / DSM 7210 / GS-15).